The chain runs to 262 residues: Ribosomal RNA small subunit methyltransferase A (262 aa).

S-adenosyl-L-methionine is bound by residues asparagine 12, leucine 14, glycine 38, glutamate 60, aspartate 83, and asparagine 102.

This sequence belongs to the class I-like SAM-binding methyltransferase superfamily. rRNA adenine N(6)-methyltransferase family. RsmA subfamily.

Its subcellular location is the cytoplasm. It carries out the reaction adenosine(1518)/adenosine(1519) in 16S rRNA + 4 S-adenosyl-L-methionine = N(6)-dimethyladenosine(1518)/N(6)-dimethyladenosine(1519) in 16S rRNA + 4 S-adenosyl-L-homocysteine + 4 H(+). In terms of biological role, specifically dimethylates two adjacent adenosines (A1518 and A1519) in the loop of a conserved hairpin near the 3'-end of 16S rRNA in the 30S particle. May play a critical role in biogenesis of 30S subunits. This chain is Ribosomal RNA small subunit methyltransferase A, found in Pelagibacter ubique (strain HTCC1062).